Reading from the N-terminus, the 631-residue chain is Shootin-1 (631 aa).

Residue M1 is modified to N-acetylmethionine. Phosphoserine occurs at positions 3 and 4. The stretch at 7–353 (EKQLQLITSL…RVNQSENSVP (347 aa)) forms a coiled coil. S101 carries the post-translational modification Phosphoserine; by PAK1. S249 carries the phosphoserine modification. 2 disordered regions span residues 343 to 404 (KRVN…EVTD) and 417 to 508 (IKKG…KSMP). A compositionally biased stretch (pro residues) spans 352–369 (VPPPPPPPPPLPPPPPNP). S375 is modified (phosphoserine). The segment covering 456–465 (LNKSTSSRSL) has biased composition (polar residues). Residue S473 is modified to Phosphoserine. T487 carries the post-translational modification Phosphothreonine. Over residues 490 to 505 (ADSSSPTGILATSESK) the composition is skewed to polar residues. Residue S494 is modified to Phosphoserine. T496 is subject to Phosphothreonine. A phosphoserine mark is found at S506 and S515. A disordered region spans residues 530-631 (FNNPCPLTPE…KTGETDSSNC (102 aa)). Residue T537 is modified to Phosphothreonine. A compositionally biased stretch (basic and acidic residues) spans 590–602 (PQTKDQAAEKDPT).

It belongs to the shootin family. In terms of assembly, interacts with L1CAM; this interaction occurs at axonal growth cones. Interacts with actin filament retrograde flow; this interaction is enhanced in a netrin-1- and PAK1-dependent manner and promotes F-actin-substrate coupling and concomitant formation of traction forces at axonal growth cones. Interacts with RUFY3. Interacts with PFN2. Interacts (via N-terminus) with KIF20B; this interaction is direct and promotes the association of SHTN1 to microtubules in primary neurons. Associates with microtubule. In terms of processing, phosphorylated on Ser-101 and Ser-249 by PAK1 through a CDC42- and RAC1-dependent signaling pathway, which enhances its association with F-actin retrograde flow in filopodia and lamellipodia of axonal growth cones. Phosphorylation on Ser-101 and Ser-249 is increased by netrin-1. In terms of tissue distribution, expressed in hippocampal neurons.

It is found in the perikaryon. Its subcellular location is the cell projection. It localises to the axon. The protein resides in the growth cone. The protein localises to the cytoplasm. It is found in the cytoskeleton. Its subcellular location is the filopodium. It localises to the lamellipodium. Functionally, involved in the generation of internal asymmetric signals required for neuronal polarization and neurite outgrowth. Mediates netrin-1-induced F-actin-substrate coupling or 'clutch engagement' within the axon growth cone through activation of CDC42, RAC1 and PAK1-dependent signaling pathway, thereby converting the F-actin retrograde flow into traction forces, concomitantly with filopodium extension and axon outgrowth. Plays a role in cytoskeletal organization by regulating the subcellular localization of phosphoinositide 3-kinase (PI3K) activity at the axonal growth cone. Also plays a role in regenerative neurite outgrowth. In the developing cortex, cooperates with KIF20B to promote both the transition from the multipolar to the bipolar stage and the radial migration of cortical neurons from the ventricular zone toward the superficial layer of the neocortex. Involved in the accumulation of phosphatidylinositol 3,4,5-trisphosphate (PIP3) in the growth cone of primary hippocampal neurons. This is Shootin-1 from Mus musculus (Mouse).